The primary structure comprises 229 residues: Histone H1 (229 aa).

Disordered stretches follow at residues 1 to 52 and 125 to 229; these read MADT…SSHP and APAL…RTRK. The span at 32–45 shows a compositional bias: basic residues; it reads KEKKKVIAAKKPKS. One can recognise an H15 domain in the interval 50–119; that stretch reads SHPSFFEMIS…KVKNSFKLPS (70 aa). Low complexity predominate over residues 125–138; it reads APALAKKPTIPKPK. Residues 139–160 show a composition bias toward basic residues; sequence VAAKPKTAKIGAKPKAKAKVAA. Low complexity-rich tracts occupy residues 161–177 and 185–205; these read KTKATTKTVAKKIPAAK and KPKTVAAKPAKVAKTAAVASP. Over residues 206 to 229 the composition is skewed to basic residues; the sequence is GKKKAVPVKKVKTVKSPAGKRTRK.

Belongs to the histone H1/H5 family.

The protein resides in the nucleus. The protein localises to the chromosome. Histones H1 are necessary for the condensation of nucleosome chains into higher-order structures. In Euphorbia esula (Leafy spurge), this protein is Histone H1.